The primary structure comprises 61 residues: Large ribosomal subunit protein bL28 (61 aa).

Belongs to the bacterial ribosomal protein bL28 family.

The protein is Large ribosomal subunit protein bL28 of Lachnospira eligens (strain ATCC 27750 / DSM 3376 / VPI C15-48 / C15-B4) (Eubacterium eligens).